The following is a 102-amino-acid chain: Small ribosomal subunit protein uS10 (102 aa).

Residues 34-61 (MAGPIPLPTKTLKVTTRKSTDGEGSSSF) are disordered.

The protein belongs to the universal ribosomal protein uS10 family. Part of the 30S ribosomal subunit.

Its function is as follows. Involved in the binding of tRNA to the ribosomes. The sequence is that of Small ribosomal subunit protein uS10 from Methanococcus aeolicus (strain ATCC BAA-1280 / DSM 17508 / OCM 812 / Nankai-3).